We begin with the raw amino-acid sequence, 318 residues long: Isoflavone reductase (318 aa).

Residues 11–17, arginine 36, and lysine 44 contribute to the NADP(+) site; that span reads GPTGAIG. The Proton acceptor role is filled by lysine 144. Arginine 148 serves as a coordination point for NADP(+).

The protein belongs to the NmrA-type oxidoreductase family. Isoflavone reductase subfamily.

The enzyme catalyses (3R)-vestitone + NADP(+) = 2'-hydroxyformononetin + NADPH + 2 H(+). The protein operates within phytoalexin biosynthesis; pterocarpan phytoalexin biosynthesis. In terms of biological role, reduces achiral isoflavones to chiral isoflavanones during the biosynthesis of chiral pterocarpan phytoalexins. The reduction product is a third isomer, which represents the penultimate intermediate in the synthesis of the phytoalexin (-)-medicarpin, the major phytoalexin in Alfalfa. In Medicago sativa (Alfalfa), this protein is Isoflavone reductase.